Here is a 942-residue protein sequence, read N- to C-terminus: Protein NLP1 (942 aa).

Pro residues predominate over residues 1 to 11 (MEQKPSPPPPP). 5 disordered regions span residues 1 to 32 (MEQKPSPPPPPRSDEEEDGLMGCGMGGTGDIA), 77 to 106 (TTPAPAAGEDDRDEAEMPSRGGGGLEVSPA), 594 to 620 (VKENTCSSDPSNSNSDKAVEKRRTKTE), 723 to 753 (FQLEPSVPDRPCEGRFTSHTSGSNSISPSCS), and 759 to 778 (SLGCSSVPKTQQQHGSAPQL). The span at 21–32 (MGCGMGGTGDIA) shows a compositional bias: gly residues. Residues 597–609 (NTCSSDPSNSNSD) show a composition bias toward polar residues. The 82-residue stretch at 609–690 (DKAVEKRRTK…IDSVHGPEGT (82 aa)) folds into the RWP-RK domain. The span at 743 to 753 (SGSNSISPSCS) shows a compositional bias: low complexity. Positions 765-774 (VPKTQQQHGS) are enriched in polar residues. The region spanning 844–927 (SLKIKAIYGE…QTVRILVNPS (84 aa)) is the PB1 domain.

The protein resides in the nucleus. Probable transcription factor. This Oryza sativa subsp. japonica (Rice) protein is Protein NLP1 (NLP1).